Reading from the N-terminus, the 37-residue chain is Photosystem II reaction center protein T (37 aa).

Residues 3-23 traverse the membrane as a helical segment; that stretch reads ALVYTFLLVSTLGILFFAIFF.

It belongs to the PsbT family. In terms of assembly, PSII is composed of 1 copy each of membrane proteins PsbA, PsbB, PsbC, PsbD, PsbE, PsbF, PsbH, PsbI, PsbJ, PsbK, PsbL, PsbM, PsbT, PsbY, PsbZ, Psb30/Ycf12, at least 3 peripheral proteins of the oxygen-evolving complex and a large number of cofactors. It forms dimeric complexes.

It is found in the plastid. It localises to the chloroplast thylakoid membrane. Found at the monomer-monomer interface of the photosystem II (PS II) dimer, plays a role in assembly and dimerization of PSII. PSII is a light-driven water plastoquinone oxidoreductase, using light energy to abstract electrons from H(2)O, generating a proton gradient subsequently used for ATP formation. The protein is Photosystem II reaction center protein T of Ephedra sinica (Chinese ephedra).